The sequence spans 203 residues: Peptide deformylase (203 aa).

Positions 130 and 173 each coordinate Fe cation. The active site involves glutamate 174. Histidine 177 contacts Fe cation.

The protein belongs to the polypeptide deformylase family. The cofactor is Fe(2+).

The enzyme catalyses N-terminal N-formyl-L-methionyl-[peptide] + H2O = N-terminal L-methionyl-[peptide] + formate. Its function is as follows. Removes the formyl group from the N-terminal Met of newly synthesized proteins. Requires at least a dipeptide for an efficient rate of reaction. N-terminal L-methionine is a prerequisite for activity but the enzyme has broad specificity at other positions. This chain is Peptide deformylase, found in Streptococcus pneumoniae serotype 2 (strain D39 / NCTC 7466).